Reading from the N-terminus, the 116-residue chain is Histone H2B (116 aa).

The span at 1–11 (TSGKAAKKAGK) shows a compositional bias: basic residues. Positions 1-25 (TSGKAAKKAGKAQKSITKGDKKKRK) are disordered. N6-acetyllysine is present on residues lysine 4, lysine 11, and lysine 14. A glycan (O-linked (GlcNAc) serine) is linked at serine 103. Residue lysine 111 forms a Glycyl lysine isopeptide (Lys-Gly) (interchain with G-Cter in ubiquitin) linkage.

As to quaternary structure, the nucleosome is a histone octamer containing two molecules each of H2A, H2B, H3 and H4 assembled in one H3-H4 heterotetramer and two H2A-H2B heterodimers. The octamer wraps approximately 147 bp of DNA. Post-translationally, monoubiquitination gives a specific tag for epigenetic transcriptional activation and is also prerequisite for histone H3 'Lys-4' and 'Lys-79' methylation. In terms of processing, glcNAcylation at Ser-103 promotes monoubiquitination of Lys-111. It fluctuates in response to extracellular glucose, and associates with transcribed genes.

Its subcellular location is the nucleus. It is found in the chromosome. Its function is as follows. Core component of nucleosome. Nucleosomes wrap and compact DNA into chromatin, limiting DNA accessibility to the cellular machineries which require DNA as a template. Histones thereby play a central role in transcription regulation, DNA repair, DNA replication and chromosomal stability. DNA accessibility is regulated via a complex set of post-translational modifications of histones, also called histone code, and nucleosome remodeling. In terms of biological role, a mixture of histones H2B and H4 has antimicrobial activity against the Gram-positive bacterium M.luteus. The polypeptide is Histone H2B (Penaeus vannamei (Whiteleg shrimp)).